The following is a 968-amino-acid chain: Bifunctional glyoxylate cycle protein (968 aa).

Residues Met-1–Leu-443 are isocitrate lyase. Residues Ser-444 to Tyr-968 are malate synthase. The active-site Proton acceptor is Arg-601. The active-site Proton donor is the Asp-881.

In the N-terminal section; belongs to the isocitrate lyase/PEP mutase superfamily. Isocitrate lyase family. This sequence in the C-terminal section; belongs to the malate synthase family. Intestinal and body wall muscle cells.

It carries out the reaction D-threo-isocitrate = glyoxylate + succinate. The catalysed reaction is glyoxylate + acetyl-CoA + H2O = (S)-malate + CoA + H(+). The protein operates within carbohydrate metabolism; glyoxylate cycle; (S)-malate from isocitrate: step 1/2. Its pathway is carbohydrate metabolism; glyoxylate cycle; (S)-malate from isocitrate: step 2/2. The polypeptide is Bifunctional glyoxylate cycle protein (icl-1) (Caenorhabditis elegans).